Reading from the N-terminus, the 226-residue chain is DNA mismatch repair protein MutH (226 aa).

The protein belongs to the MutH family.

Its subcellular location is the cytoplasm. In terms of biological role, sequence-specific endonuclease that cleaves unmethylated GATC sequences. It is involved in DNA mismatch repair. The sequence is that of DNA mismatch repair protein MutH from Vibrio campbellii (strain ATCC BAA-1116).